The sequence spans 221 residues: Glutathione S-transferase alpha-5 (221 aa).

The GST N-terminal domain occupies 3-83; it reads GKPVLHYFDG…YIATKYNLYG (81 aa). At Lys-4 the chain carries N6-succinyllysine. Residues Tyr-9, Arg-45, 54 to 55, and 67 to 68 each bind glutathione; these read QV and QT. Positions 85–207 constitute a GST C-terminal domain; that stretch reads DMKERALIDM…LQPGSQRKPF (123 aa).

This sequence belongs to the GST superfamily. Alpha family. Heterodimer of YC1 and YC2. Liver, nasal mucosa and epididymis.

Its subcellular location is the cytoplasm. It carries out the reaction RX + glutathione = an S-substituted glutathione + a halide anion + H(+). Its function is as follows. Conjugation of reduced glutathione to a wide number of exogenous and endogenous hydrophobic electrophiles. Has substantial activity toward aflatoxin B1-8,9-epoxide. In Rattus norvegicus (Rat), this protein is Glutathione S-transferase alpha-5 (Gsta5).